The following is a 216-amino-acid chain: Ras-related protein RABE1d (216 aa).

Position 22-29 (22-29) interacts with GTP; that stretch reads GDSGVGKS. The Effector region motif lies at 44 to 52; the sequence is FITTIGIDF. Residues 70–74, 128–131, and 159–160 contribute to the GTP site; these read DTAGQ, NKAD, and SA. A disordered region spans residues 196–216; it reads TKQDTAASSSTAEKSACCSYV. Low complexity predominate over residues 200–216; the sequence is TAASSSTAEKSACCSYV. 2 S-geranylgeranyl cysteine lipidation sites follow: C212 and C213.

Belongs to the small GTPase superfamily. Rab family. As to quaternary structure, interacts with PI5K2.

It localises to the golgi apparatus membrane. The protein resides in the cell membrane. Involved in membrane trafficking from the Golgi to the plasma membrane. This chain is Ras-related protein RABE1d (RABE1D), found in Arabidopsis thaliana (Mouse-ear cress).